We begin with the raw amino-acid sequence, 815 residues long: uncharacterized protein (815 aa).

Positions 1–21 (MNIYRLSFVSCLVMAMPCAMA) are cleaved as a signal peptide. An intrachain disulfide couples C795 to C814.

It belongs to the fimbrial export usher family.

The protein localises to the cell outer membrane. Its function is as follows. Could be involved in the export and assembly of the putative YbgD fimbrial subunit across the outer membrane. This is an uncharacterized protein from Escherichia coli (strain K12).